A 250-amino-acid chain; its full sequence is MVLTGVTSKAIRKGDAEPPLSKGSFRVYNMRFCPWAERAMLYVAAKGIEAEVVNLNVTDKLEWYWTKHYQGKAPAVEHNGKVVIESGFIPEYLDDAFPETRILPTDPYEKVQQKLLADRLTAVAHAVPLLFAVMRDRTLKDEKQRKVFEVLKQAENLLANDFYAGSQPGYPDYLSFPFFEKIWWSASLDGVVDLPTIEFPGEEEYPKLTKWFQKMISSDVVQSVTQSLEHGAAFMNAYATHQELNYDLGL.

In terms of domain architecture, GST N-terminal spans Ser-21–Arg-101. Cys-33 serves as the catalytic Nucleophile. Residues Lys-60 and Glu-85–Ser-86 each bind glutathione. Positions Asp-106–Phe-234 constitute a GST C-terminal domain.

This sequence belongs to the GST superfamily. Omega family. As to quaternary structure, homodimer. In terms of tissue distribution, expressed in the intestinal cells.

Its subcellular location is the cytoplasm. It catalyses the reaction RX + glutathione = an S-substituted glutathione + a halide anion + H(+). The catalysed reaction is L-dehydroascorbate + 2 glutathione = glutathione disulfide + L-ascorbate. The enzyme catalyses methylarsonate + 2 glutathione + H(+) = methylarsonous acid + glutathione disulfide + H2O. Functionally, exhibits glutathione-dependent thiol transferase activity. Has dehydroascorbate reductase activity and may contribute to the recycling of ascorbic acid. Participates in the biotransformation of inorganic arsenic and reduces monomethylarsonic acid (MMA). Protects against environmental stress and oxidative stress. The sequence is that of Glutathione transferase omega-1 (gsto-1) from Caenorhabditis elegans.